Reading from the N-terminus, the 292-residue chain is Expansin-B11 (292 aa).

The first 27 residues, 1 to 27 (MAKSCTLVLLLVALVGLSLLVSPIACS), serve as a signal peptide directing secretion. The N-linked (GlcNAc...) asparagine glycan is linked to N51. The Expansin-like EG45 domain maps to 82–192 (GGACGYQTAV…RRVPCKYSGV (111 aa)). Cystine bridges form between C85/C114, C117/C187, and C122/C128. In terms of domain architecture, Expansin-like CBD spans 205–287 (FYFEVLIEFE…SWKPGVTYRS (83 aa)).

This sequence belongs to the expansin family. Expansin B subfamily. Expressed in internodes.

It is found in the secreted. It localises to the cell wall. Its subcellular location is the membrane. In terms of biological role, may cause loosening and extension of plant cell walls by disrupting non-covalent bonding between cellulose microfibrils and matrix glucans. No enzymatic activity has been found. May be required for rapid internodal elongation in deepwater rice during submergence. In Oryza sativa subsp. japonica (Rice), this protein is Expansin-B11 (EXPB11).